A 180-amino-acid polypeptide reads, in one-letter code: Large ribosomal subunit protein uL5 (180 aa).

The protein belongs to the universal ribosomal protein uL5 family. In terms of assembly, part of the 50S ribosomal subunit; part of the 5S rRNA/L5/L18/L25 subcomplex. Contacts the 5S rRNA and the P site tRNA. Forms a bridge to the 30S subunit in the 70S ribosome.

In terms of biological role, this is one of the proteins that bind and probably mediate the attachment of the 5S RNA into the large ribosomal subunit, where it forms part of the central protuberance. In the 70S ribosome it contacts protein S13 of the 30S subunit (bridge B1b), connecting the 2 subunits; this bridge is implicated in subunit movement. Contacts the P site tRNA; the 5S rRNA and some of its associated proteins might help stabilize positioning of ribosome-bound tRNAs. This chain is Large ribosomal subunit protein uL5, found in Chlamydia felis (strain Fe/C-56) (Chlamydophila felis).